The following is a 341-amino-acid chain: Beta-ketoacyl-[acyl-carrier-protein] synthase III 1 (341 aa).

Catalysis depends on residues C113 and H249. An ACP-binding region spans residues 250–254; sequence QANIR. N279 is an active-site residue.

The protein belongs to the thiolase-like superfamily. FabH family. As to quaternary structure, homodimer.

It localises to the cytoplasm. The catalysed reaction is malonyl-[ACP] + acetyl-CoA + H(+) = 3-oxobutanoyl-[ACP] + CO2 + CoA. Its pathway is lipid metabolism; fatty acid biosynthesis. Functionally, catalyzes the condensation reaction of fatty acid synthesis by the addition to an acyl acceptor of two carbons from malonyl-ACP. Catalyzes the first condensation reaction which initiates fatty acid synthesis and may therefore play a role in governing the total rate of fatty acid production. Possesses both acetoacetyl-ACP synthase and acetyl transacylase activities. Its substrate specificity determines the biosynthesis of branched-chain and/or straight-chain of fatty acids. The protein is Beta-ketoacyl-[acyl-carrier-protein] synthase III 1 of Deinococcus radiodurans (strain ATCC 13939 / DSM 20539 / JCM 16871 / CCUG 27074 / LMG 4051 / NBRC 15346 / NCIMB 9279 / VKM B-1422 / R1).